The following is a 783-amino-acid chain: Endonuclease MutS2 (783 aa).

328–335 is a binding site for ATP; it reads GPNTGGKT. A Smr domain is found at 708 to 783; sequence LDLRGKRYEE…GSGCTIATLG (76 aa).

The protein belongs to the DNA mismatch repair MutS family. MutS2 subfamily. In terms of assembly, homodimer. Binds to stalled ribosomes, contacting rRNA.

Its function is as follows. Endonuclease that is involved in the suppression of homologous recombination and thus may have a key role in the control of bacterial genetic diversity. Functionally, acts as a ribosome collision sensor, splitting the ribosome into its 2 subunits. Detects stalled/collided 70S ribosomes which it binds and splits by an ATP-hydrolysis driven conformational change. Acts upstream of the ribosome quality control system (RQC), a ribosome-associated complex that mediates the extraction of incompletely synthesized nascent chains from stalled ribosomes and their subsequent degradation. Probably generates substrates for RQC. This chain is Endonuclease MutS2, found in Streptococcus thermophilus (strain CNRZ 1066).